Consider the following 234-residue polypeptide: Probable chemoreceptor glutamine deamidase CheD 1 (234 aa).

The disordered stretch occupies residues 183–234 (AREAAGPRGERAARARPRVELFGTPAPKAQATPRIELFGTRATQPATRKQEA). Residues 190–201 (RGERAARARPRV) are compositionally biased toward basic and acidic residues. Over residues 223–234 (RATQPATRKQEA) the composition is skewed to polar residues.

This sequence belongs to the CheD family.

The catalysed reaction is L-glutaminyl-[protein] + H2O = L-glutamyl-[protein] + NH4(+). Functionally, probably deamidates glutamine residues to glutamate on methyl-accepting chemotaxis receptors (MCPs), playing an important role in chemotaxis. The sequence is that of Probable chemoreceptor glutamine deamidase CheD 1 from Burkholderia thailandensis (strain ATCC 700388 / DSM 13276 / CCUG 48851 / CIP 106301 / E264).